We begin with the raw amino-acid sequence, 510 residues long: Inositol-3-phosphate synthase (510 aa).

NAD(+)-binding residues include glycine 70, glycine 71, asparagine 72, asparagine 73, aspartate 143, isoleucine 180, glutamine 190, arginine 193, threonine 230, alanine 231, asparagine 232, threonine 233, glycine 281, serine 282, aspartate 306, serine 309, asparagine 340, asparagine 341, aspartate 342, lysine 355, glycine 393, aspartate 394, aspartate 422, and serine 423.

It belongs to the myo-inositol 1-phosphate synthase family. The cofactor is NAD(+).

It is found in the cytoplasm. The protein localises to the cytosol. Its subcellular location is the nucleus. It catalyses the reaction D-glucose 6-phosphate = 1D-myo-inositol 3-phosphate. Its pathway is polyol metabolism; myo-inositol biosynthesis; myo-inositol from D-glucose 6-phosphate: step 1/2. Functionally, key enzyme in myo-inositol biosynthesis pathway that catalyzes the conversion of glucose 6-phosphate to 1-myo-inositol 1-phosphate in a NAD-dependent manner. This is Inositol-3-phosphate synthase (INPS1) from Nicotiana paniculata.